The primary structure comprises 108 residues: Ig kappa chain V-V region MOPC 149 (108 aa).

The framework-1 stretch occupies residues 1 to 23 (DIQMTQSPDYLSASVGETVTITC). The cysteines at positions 23 and 88 are disulfide-linked. The segment at 24 to 34 (RASENIYSYLA) is complementarity-determining-1. Positions 35–49 (WYQQKQGKSPQLLVY) are framework-2. A complementarity-determining-2 region spans residues 50 to 56 (DAKTLVE). The interval 57–88 (GVPSRFSGSGSGTQFSLKINSLQPEDFGSYYC) is framework-3. The interval 89-97 (QHHYGIPFT) is complementarity-determining-3. Positions 98–108 (FGSGTKLEIKR) are framework-4.

The sequence is that of Ig kappa chain V-V region MOPC 149 from Mus musculus (Mouse).